Consider the following 756-residue polypeptide: Cellulose synthase catalytic subunit [UDP-forming] (756 aa).

A run of 4 helical transmembrane segments spans residues Ala27–Leu47, Asn49–Gly69, Gly106–Ser126, and Leu167–Leu187. The segment at Asp147–Ile242 is catalytic subdomain A. Asp189 is an active-site residue. The substrate site is built by Asp238 and Asp240. The catalytic subdomain B stretch occupies residues Glu319 to Met379. Asp335 is a catalytic residue. The next 5 membrane-spanning stretches (helical) occupy residues Phe409–Gly429, Ile432–Ile452, Val470–Pro490, Asn517–Val537, and Leu551–Gly571. In terms of domain architecture, PilZ spans Gln576–Gly681. Positions Asn721 to Ser756 are disordered. Residues Thr740–Ser756 show a composition bias toward polar residues.

It belongs to the glycosyltransferase 2 family. Requires Mg(2+) as cofactor.

It localises to the cell inner membrane. It carries out the reaction [(1-&gt;4)-beta-D-glucosyl](n) + UDP-alpha-D-glucose = [(1-&gt;4)-beta-D-glucosyl](n+1) + UDP + H(+). It participates in glycan metabolism; bacterial cellulose biosynthesis. Its activity is regulated as follows. Activated by bis-(3'-5') cyclic diguanylic acid (c-di-GMP). Catalytic subunit of cellulose synthase. It polymerizes uridine 5'-diphosphate glucose to cellulose. The thick cellulosic mats generated by this enzyme probably provide a specialized protective environment to the bacterium. This Komagataeibacter sucrofermentans (strain ATCC 700178 / DSM 15973 / CECT 7291 / JCM 9730 / LMG 18788 / BPR 2001) (Acetobacter xylinus subsp. sucrofermentans) protein is Cellulose synthase catalytic subunit [UDP-forming] (bcsA).